Here is a 143-residue protein sequence, read N- to C-terminus: Putative 2'-deoxynucleoside 5'-phosphate N-hydrolase 1 (143 aa).

Residues H37, E82, and 106 to 108 (SAM) contribute to the substrate site.

The protein belongs to the 2'-deoxynucleoside 5'-phosphate N-hydrolase 1 family. Monomer and homodimer.

It carries out the reaction a pyrimidine 2'-deoxyribonucleoside 5'-phosphate + H2O = a pyrimidine nucleobase + 2-deoxy-D-ribose 5-phosphate. It catalyses the reaction a purine 2'-deoxyribonucleoside 5'-phosphate + H2O = a purine nucleobase + 2-deoxy-D-ribose 5-phosphate. In terms of biological role, catalyzes the cleavage of the N-glycosidic bond of deoxyribonucleoside 5'-monophosphates to yield deoxyribose 5-phosphate and a purine or pyrimidine base. This Thermofilum pendens (strain DSM 2475 / Hrk 5) protein is Putative 2'-deoxynucleoside 5'-phosphate N-hydrolase 1.